A 488-amino-acid polypeptide reads, in one-letter code: GTPase Der (488 aa).

EngA-type G domains lie at 3–166 and 193–366; these read PVIA…PRDP and IKIA…MSAV. Residues 9–16, 56–60, 118–121, 199–206, 246–250, and 311–314 contribute to the GTP site; these read GRPNVGKS, DTGGI, NKID, DTAGV, and NKWD. In terms of domain architecture, KH-like spans 367-451; the sequence is TRWPTSRLTQ…PIRIEYKGGD (85 aa). Residues 449–461 show a composition bias toward basic and acidic residues; it reads GGDNPFEGKKNTL. The tract at residues 449-488 is disordered; sequence GGDNPFEGKKNTLTDRQVNKKRRLMSHHKKAEKKRRDKRK. Residues 467–488 show a composition bias toward basic residues; the sequence is NKKRRLMSHHKKAEKKRRDKRK.

The protein belongs to the TRAFAC class TrmE-Era-EngA-EngB-Septin-like GTPase superfamily. EngA (Der) GTPase family. Associates with the 50S ribosomal subunit.

Its function is as follows. GTPase that plays an essential role in the late steps of ribosome biogenesis. This chain is GTPase Der, found in Pseudomonas entomophila (strain L48).